We begin with the raw amino-acid sequence, 470 residues long: ATP synthase subunit beta (470 aa).

158–165 lines the ATP pocket; the sequence is GGAGVGKT.

It belongs to the ATPase alpha/beta chains family. F-type ATPases have 2 components, CF(1) - the catalytic core - and CF(0) - the membrane proton channel. CF(1) has five subunits: alpha(3), beta(3), gamma(1), delta(1), epsilon(1). CF(0) has three main subunits: a(1), b(2) and c(9-12). The alpha and beta chains form an alternating ring which encloses part of the gamma chain. CF(1) is attached to CF(0) by a central stalk formed by the gamma and epsilon chains, while a peripheral stalk is formed by the delta and b chains.

The protein localises to the cell membrane. The enzyme catalyses ATP + H2O + 4 H(+)(in) = ADP + phosphate + 5 H(+)(out). In terms of biological role, produces ATP from ADP in the presence of a proton gradient across the membrane. The catalytic sites are hosted primarily by the beta subunits. In Shouchella clausii (strain KSM-K16) (Alkalihalobacillus clausii), this protein is ATP synthase subunit beta.